The primary structure comprises 59 residues: U-actitoxin-Aer2a (59 aa).

Post-translationally, contains 5 disulfide bonds.

It is found in the secreted. The protein localises to the nematocyst. This is U-actitoxin-Aer2a from Anemonia erythraea (Sea anemone).